The sequence spans 728 residues: Histone demethylase JHD2 (728 aa).

The JmjN domain occupies 4-47 (IPALYPTEQEFKNPIDYLSNPHIKRLGVRYGMVKVVPPNGFCPP). The PHD-type zinc finger occupies 235 to 285 (DDACIVCRKTNDPKRTILCDSCDKPFHIYCLSPPLERVPSGDWICNTCIVG). The JmjC domain maps to 381-549 (KYCDHPMNLT…YGFGAITDYK (169 aa)). 3 residues coordinate Fe cation: histidine 427, aspartate 430, and histidine 517.

It belongs to the JARID1 histone demethylase family. The cofactor is Fe(2+).

It localises to the nucleus. The catalysed reaction is N(6),N(6),N(6)-trimethyl-L-lysyl(4)-[histone H3] + 3 2-oxoglutarate + 3 O2 = L-lysyl(4)-[histone H3] + 3 formaldehyde + 3 succinate + 3 CO2. Functionally, histone demethylase that demethylates 'Lys-4' of histone H3, thereby playing a central role in histone code. Demethylates trimethylated H3 'Lys-4'. The protein is Histone demethylase JHD2 (JHD2) of Saccharomyces cerevisiae (strain ATCC 204508 / S288c) (Baker's yeast).